The primary structure comprises 42 residues: Crotamine-IV-2 (42 aa).

Disulfide bonds link cysteine 4-cysteine 37, cysteine 11-cysteine 31, and cysteine 19-cysteine 38.

It belongs to the crotamine-myotoxin family. Monomer. Expressed by the venom gland.

Its subcellular location is the secreted. Its function is as follows. Cationic peptide that possesses multiple functions. It acts as a cell-penetrating peptide (CPP), and as a potent voltage-gated potassium channel (Kv) inhibitor. It exhibits antimicrobial activities, and hind limb paralysis. It also induces potent blockade of neuromuscular transmission in young chicken biventer cervicis preparation and potent myotoxic effect. In vivo, induces myonecrosis, upon intramuscular or subcutaneous injections into mice. This Crotalus durissus cumanensis (South American rattlesnake) protein is Crotamine-IV-2.